Consider the following 393-residue polypeptide: UPF0496 protein At2g18630 (393 aa).

The interval 1-20 (MMGGKSSKSKKNVEFGSPST) is disordered. A coiled-coil region spans residues 149-222 (VNQFEEENED…RLRNIKTWRR (74 aa)). 2 consecutive transmembrane segments (helical) span residues 226-246 (MVFV…AAVA) and 249-269 (PVVA…GKWC). The stretch at 299–356 (KEMDNISILVRKVEVEIESLLKKAEFAITEEKEVRLAIDEIKKKLDVFTETIEELGEH) forms a coiled coil.

This sequence belongs to the UPF0496 family.

It is found in the membrane. The chain is UPF0496 protein At2g18630 from Arabidopsis thaliana (Mouse-ear cress).